The sequence spans 60 residues: Large ribosomal subunit protein uL30 (60 aa).

The protein belongs to the universal ribosomal protein uL30 family. In terms of assembly, part of the 50S ribosomal subunit.

This Streptococcus pyogenes serotype M1 protein is Large ribosomal subunit protein uL30.